The primary structure comprises 371 residues: Maltose/maltodextrin import ATP-binding protein MalK (371 aa).

Residues 4-234 form the ABC transporter domain; the sequence is VQLQNVTKAW…PADRFVAGFI (231 aa). Residue 36-43 coordinates ATP; that stretch reads GPSGCGKS.

The protein belongs to the ABC transporter superfamily. Maltooligosaccharide importer (TC 3.A.1.1.1) family. The complex is composed of two ATP-binding proteins (MalK), two transmembrane proteins (MalG and MalK) and a solute-binding protein (MalE).

It localises to the cell inner membrane. It catalyses the reaction D-maltose(out) + ATP + H2O = D-maltose(in) + ADP + phosphate + H(+). Functionally, part of the ABC transporter complex MalEFGK involved in maltose/maltodextrin import. Responsible for energy coupling to the transport system. In Escherichia coli O6:H1 (strain CFT073 / ATCC 700928 / UPEC), this protein is Maltose/maltodextrin import ATP-binding protein MalK.